The chain runs to 100 residues: Small ribosomal subunit protein uS14 (100 aa).

It belongs to the universal ribosomal protein uS14 family. In terms of assembly, part of the 30S ribosomal subunit. Contacts proteins S3 and S10.

Its function is as follows. Binds 16S rRNA, required for the assembly of 30S particles and may also be responsible for determining the conformation of the 16S rRNA at the A site. This is Small ribosomal subunit protein uS14 from Gloeothece citriformis (strain PCC 7424) (Cyanothece sp. (strain PCC 7424)).